The sequence spans 349 residues: Phosphate acyltransferase (349 aa).

The protein belongs to the PlsX family. In terms of assembly, homodimer. Probably interacts with PlsY.

The protein resides in the cytoplasm. It carries out the reaction a fatty acyl-[ACP] + phosphate = an acyl phosphate + holo-[ACP]. It functions in the pathway lipid metabolism; phospholipid metabolism. In terms of biological role, catalyzes the reversible formation of acyl-phosphate (acyl-PO(4)) from acyl-[acyl-carrier-protein] (acyl-ACP). This enzyme utilizes acyl-ACP as fatty acyl donor, but not acyl-CoA. The protein is Phosphate acyltransferase of Rhodospirillum rubrum (strain ATCC 11170 / ATH 1.1.1 / DSM 467 / LMG 4362 / NCIMB 8255 / S1).